Consider the following 297-residue polypeptide: Phosphoribosylaminoimidazole-succinocarboxamide synthase (297 aa).

It belongs to the SAICAR synthetase family.

The enzyme catalyses 5-amino-1-(5-phospho-D-ribosyl)imidazole-4-carboxylate + L-aspartate + ATP = (2S)-2-[5-amino-1-(5-phospho-beta-D-ribosyl)imidazole-4-carboxamido]succinate + ADP + phosphate + 2 H(+). Its pathway is purine metabolism; IMP biosynthesis via de novo pathway; 5-amino-1-(5-phospho-D-ribosyl)imidazole-4-carboxamide from 5-amino-1-(5-phospho-D-ribosyl)imidazole-4-carboxylate: step 1/2. The sequence is that of Phosphoribosylaminoimidazole-succinocarboxamide synthase from Saccharopolyspora erythraea (strain ATCC 11635 / DSM 40517 / JCM 4748 / NBRC 13426 / NCIMB 8594 / NRRL 2338).